The primary structure comprises 216 residues: Uracil phosphoribosyltransferase (216 aa).

Residues R85, R110, and 135 to 143 contribute to the 5-phospho-alpha-D-ribose 1-diphosphate site; that span reads DPMVATGYS. Uracil is bound by residues I200 and 205–207; that span reads GDA. 5-phospho-alpha-D-ribose 1-diphosphate is bound at residue D206.

Belongs to the UPRTase family. It depends on Mg(2+) as a cofactor.

The enzyme catalyses UMP + diphosphate = 5-phospho-alpha-D-ribose 1-diphosphate + uracil. The protein operates within pyrimidine metabolism; UMP biosynthesis via salvage pathway; UMP from uracil: step 1/1. Its activity is regulated as follows. Allosterically activated by GTP. In terms of biological role, catalyzes the conversion of uracil and 5-phospho-alpha-D-ribose 1-diphosphate (PRPP) to UMP and diphosphate. The sequence is that of Uracil phosphoribosyltransferase from Burkholderia thailandensis (strain ATCC 700388 / DSM 13276 / CCUG 48851 / CIP 106301 / E264).